Consider the following 200-residue polypeptide: Small ribosomal subunit protein uS4 (200 aa).

Positions 22 to 43 are disordered; the sequence is TGKELERRPYAPGQHGPTQRKK. In terms of domain architecture, S4 RNA-binding spans 92–170; it reads QRLDNIVYRL…VPEYVTFDAE (79 aa).

Belongs to the universal ribosomal protein uS4 family. Part of the 30S ribosomal subunit. Contacts protein S5. The interaction surface between S4 and S5 is involved in control of translational fidelity.

Functionally, one of the primary rRNA binding proteins, it binds directly to 16S rRNA where it nucleates assembly of the body of the 30S subunit. In terms of biological role, with S5 and S12 plays an important role in translational accuracy. The chain is Small ribosomal subunit protein uS4 from Listeria monocytogenes serotype 4a (strain HCC23).